The following is a 545-amino-acid chain: Glucose-6-phosphate isomerase (545 aa).

The active-site Proton donor is the Glu-351. Catalysis depends on residues His-382 and Lys-510.

Belongs to the GPI family.

It localises to the cytoplasm. The enzyme catalyses alpha-D-glucose 6-phosphate = beta-D-fructose 6-phosphate. The protein operates within carbohydrate biosynthesis; gluconeogenesis. Its pathway is carbohydrate degradation; glycolysis; D-glyceraldehyde 3-phosphate and glycerone phosphate from D-glucose: step 2/4. Its function is as follows. Catalyzes the reversible isomerization of glucose-6-phosphate to fructose-6-phosphate. This Helicobacter pylori (strain Shi470) protein is Glucose-6-phosphate isomerase.